The following is a 261-amino-acid chain: NAD kinase (261 aa).

Aspartate 54 acts as the Proton acceptor in catalysis. Residues 54–55 (DG), 123–124 (ND), arginine 150, aspartate 152, and 163–168 (TAYSLS) contribute to the NAD(+) site.

The protein belongs to the NAD kinase family. The cofactor is a divalent metal cation.

It localises to the cytoplasm. The catalysed reaction is NAD(+) + ATP = ADP + NADP(+) + H(+). Functionally, involved in the regulation of the intracellular balance of NAD and NADP, and is a key enzyme in the biosynthesis of NADP. Catalyzes specifically the phosphorylation on 2'-hydroxyl of the adenosine moiety of NAD to yield NADP. In Caldicellulosiruptor bescii (strain ATCC BAA-1888 / DSM 6725 / KCTC 15123 / Z-1320) (Anaerocellum thermophilum), this protein is NAD kinase.